Reading from the N-terminus, the 185-residue chain is Peptidyl-tRNA hydrolase (185 aa).

Y14 contacts tRNA. The active-site Proton acceptor is the H19. Y64, N66, and N112 together coordinate tRNA.

It belongs to the PTH family. As to quaternary structure, monomer.

The protein localises to the cytoplasm. It catalyses the reaction an N-acyl-L-alpha-aminoacyl-tRNA + H2O = an N-acyl-L-amino acid + a tRNA + H(+). In terms of biological role, hydrolyzes ribosome-free peptidyl-tRNAs (with 1 or more amino acids incorporated), which drop off the ribosome during protein synthesis, or as a result of ribosome stalling. Catalyzes the release of premature peptidyl moieties from peptidyl-tRNA molecules trapped in stalled 50S ribosomal subunits, and thus maintains levels of free tRNAs and 50S ribosomes. The chain is Peptidyl-tRNA hydrolase from Lactobacillus delbrueckii subsp. bulgaricus (strain ATCC 11842 / DSM 20081 / BCRC 10696 / JCM 1002 / NBRC 13953 / NCIMB 11778 / NCTC 12712 / WDCM 00102 / Lb 14).